We begin with the raw amino-acid sequence, 387 residues long: Acyltransferase MdmB (387 aa).

10 helical membrane passes run 8–28 (LPSLTGLRWFAALAVFACHIA), 45–65 (ITTLGSIAVSVFFLLSGFVLA), 85–105 (IYPLHLVTFLIAGVIIFSLAE), 139–161 (TPSWSLSCEFAFYLTFPLWYRLV), 170–190 (WWCAAGIAAAVICVPFVTSQF), 209–229 (CWLPPVRMLEFVLGIVMALIL), 236–256 (GPGVVSSALLLAAAYGVTQVV), 258–278 (PMFTIAACSIVPAALLITALA), 292–312 (AVLVRLGEWSFAFYLVHFMVI), and 336–356 (ALALAMLAVAIVAGGLLHTVV).

The protein belongs to the acyltransferase 3 family.

It localises to the cell membrane. Its function is as follows. Catalyzes the acylation of the mycaminose sugar during midecamycin biosynthesis. This is Acyltransferase MdmB (mdmB) from Streptomyces mycarofaciens.